The following is a 136-amino-acid chain: Large ribosomal subunit protein uL16 (136 aa).

It belongs to the universal ribosomal protein uL16 family. In terms of assembly, part of the 50S ribosomal subunit.

Functionally, binds 23S rRNA and is also seen to make contacts with the A and possibly P site tRNAs. In Aliivibrio salmonicida (strain LFI1238) (Vibrio salmonicida (strain LFI1238)), this protein is Large ribosomal subunit protein uL16.